Consider the following 156-residue polypeptide: 17.4 kDa class I heat shock protein (156 aa).

The region spanning 42-156 (DVAAFTNAKV…PEVKSVDISG (115 aa)) is the sHSP domain.

It belongs to the small heat shock protein (HSP20) family. As to quaternary structure, may form oligomeric structures. Binds to AKR2A.

Its subcellular location is the cytoplasm. This Arabidopsis thaliana (Mouse-ear cress) protein is 17.4 kDa class I heat shock protein (HSP17.4A).